Consider the following 286-residue polypeptide: L-rhamnose-binding lectin CSL1 (286 aa).

2 consecutive SUEL-type lectin domains span residues 96–186 (TTCE…YICL) and 193–280 (TCEG…YTCL).

In terms of biological role, L-rhamnose binding lectin. Has hemagglutinating activity towards rabbit erythrocytes, but not human type B erythrocytes. Hemagglutinating activity is inhibited by smooth-type lipopolysaccharide (LPS) from K.pneumoniae, E.coli K-235, S.flexneri 1A, A.salmonicida and S.minnesota and rough-type LPS from S.flexneri, but not by rough-type LPS from E.coli K12 and E.coli EH100. Agglutinates E.coli K12 and B.subtilis. The chain is L-rhamnose-binding lectin CSL1 from Oncorhynchus keta (Chum salmon).